The primary structure comprises 429 residues: Tyrosine--tRNA ligase (429 aa).

Tyr-36 contributes to the L-tyrosine binding site. The 'HIGH' region motif lies at 41 to 50; that stretch reads PTAASLHAGH. Tyr-171 and Gln-175 together coordinate L-tyrosine. Positions 231–235 match the 'KMSKS' region motif; the sequence is KFGKS. Lys-234 contributes to the ATP binding site. The 58-residue stretch at 360–417 folds into the S4 RNA-binding domain; that stretch reads ATIVDLLVATGLAESRGAARRTVNEGGAAVNNQKIADPDWTPADGDYLHGRWLVVRRG.

Belongs to the class-I aminoacyl-tRNA synthetase family. TyrS type 1 subfamily. As to quaternary structure, homodimer.

It is found in the cytoplasm. The enzyme catalyses tRNA(Tyr) + L-tyrosine + ATP = L-tyrosyl-tRNA(Tyr) + AMP + diphosphate + H(+). In terms of biological role, catalyzes the attachment of tyrosine to tRNA(Tyr) in a two-step reaction: tyrosine is first activated by ATP to form Tyr-AMP and then transferred to the acceptor end of tRNA(Tyr). This is Tyrosine--tRNA ligase from Nocardia farcinica (strain IFM 10152).